Consider the following 469-residue polypeptide: 3-isopropylmalate dehydratase large subunit (469 aa).

[4Fe-4S] cluster-binding residues include Cys-347, Cys-410, and Cys-413.

It belongs to the aconitase/IPM isomerase family. LeuC type 1 subfamily. As to quaternary structure, heterodimer of LeuC and LeuD. [4Fe-4S] cluster is required as a cofactor.

It catalyses the reaction (2R,3S)-3-isopropylmalate = (2S)-2-isopropylmalate. Its pathway is amino-acid biosynthesis; L-leucine biosynthesis; L-leucine from 3-methyl-2-oxobutanoate: step 2/4. Its function is as follows. Catalyzes the isomerization between 2-isopropylmalate and 3-isopropylmalate, via the formation of 2-isopropylmaleate. The polypeptide is 3-isopropylmalate dehydratase large subunit (Burkholderia pseudomallei (strain 1106a)).